Here is a 530-residue protein sequence, read N- to C-terminus: Chaperone Ric-8A (530 aa).

S435 carries the phosphoserine modification. 2 positions are modified to phosphothreonine: T440 and T442. Phosphoserine is present on residues S501, S522, S523, and S527.

The protein belongs to the synembryn family. In terms of assembly, interacts with GDP-bound G alpha proteins GNAI1, GNAO1 and GNAQ, and with GNA13 with lower affinity. Does not interact with G-alpha proteins when they are in complex with subunits beta and gamma. Interacts (via C-terminus) with RGS14; the interaction stimulates the dissociation of the complex between RGS14 and the active GTP-bound form of GNAI1. Interacts with NCS1; interaction is favored in the absence of Ca(2+) and myristoylation of NCS1 is not required. Phosphorylated at Ser-435 and Thr-440 by CK2, stabilizing its interface with G alpha proteins.

Its subcellular location is the cytoplasm. It is found in the cell cortex. Its function is as follows. Chaperone that specifically binds and folds nascent G alpha proteins prior to G protein heterotrimer formation, promoting their stability and activity: folds GNAI1, GNAO1, GNA13 and GNAQ. Does not fold G(s) G-alpha proteins GNAS nor GNAL. Also acts as a guanine nucleotide exchange factor (GEF) for G alpha proteins by stimulating exchange of bound GDP for free GTP. Involved in regulation of microtubule pulling forces during mitotic movement of chromosomes by stimulating G(i)-alpha protein (GNAI1), possibly leading to release G(i)-alpha-GTP and NuMA proteins from the NuMA-GPSM2-G(i)-alpha-GDP complex. Also acts as an activator for G(q)-alpha (GNAQ) protein by enhancing the G(q)-coupled receptor-mediated ERK activation. The chain is Chaperone Ric-8A (RIC8A) from Pongo abelii (Sumatran orangutan).